A 229-amino-acid polypeptide reads, in one-letter code: Peptidase E (229 aa).

Residues serine 120, aspartate 135, and histidine 157 each act as charge relay system in the active site.

It belongs to the peptidase S51 family.

The protein localises to the cytoplasm. The catalysed reaction is Dipeptidase E catalyzes the hydrolysis of dipeptides Asp-|-Xaa. It does not act on peptides with N-terminal Glu, Asn or Gln, nor does it cleave isoaspartyl peptides.. In terms of biological role, hydrolyzes dipeptides containing N-terminal aspartate residues. May play a role in allowing the cell to use peptide aspartate to spare carbon otherwise required for the synthesis of the aspartate family of amino acids. This chain is Peptidase E (pepE), found in Salmonella typhimurium (strain LT2 / SGSC1412 / ATCC 700720).